Here is a 239-residue protein sequence, read N- to C-terminus: MIALAGQTPDVIAILPAAGIGSRMQTALPKQYLTIGNKTLLEHAIDALLCHPCISEAVVAISAEDRWFYQLPVAADPRVRVVTGGSVRADSVMAALRCASAASWVLVHDAARPCLHQDDLRRLLVITAHTEVGGLLATPVRDTMKRAHTGSDIIAATVEREDLWHALTPQLFARDLLITCLERALAEGATVTDEASALEYCGYAPLLVPGRVDNIKVTRPEDLALARFFFSQLANTESV.

This sequence belongs to the IspD/TarI cytidylyltransferase family. IspD subfamily. As to quaternary structure, homodimer.

It carries out the reaction 2-C-methyl-D-erythritol 4-phosphate + CTP + H(+) = 4-CDP-2-C-methyl-D-erythritol + diphosphate. The protein operates within isoprenoid biosynthesis; isopentenyl diphosphate biosynthesis via DXP pathway; isopentenyl diphosphate from 1-deoxy-D-xylulose 5-phosphate: step 2/6. Catalyzes the formation of 4-diphosphocytidyl-2-C-methyl-D-erythritol from CTP and 2-C-methyl-D-erythritol 4-phosphate (MEP). In Sodalis glossinidius (strain morsitans), this protein is 2-C-methyl-D-erythritol 4-phosphate cytidylyltransferase.